A 415-amino-acid polypeptide reads, in one-letter code: Probable beta-1,4-xylosyltransferase IRX10L (415 aa).

A topological domain (cytoplasmic) is located at residue methionine 1. Residues 2 to 22 (KLSSCVLIFLLCNTFSSISAF) form a helical; Signal-anchor for type II membrane protein membrane-spanning segment. Over 23-415 (RLSRSQPTER…AGPVADLKPW (393 aa)) the chain is Lumenal. N-linked (GlcNAc...) asparagine glycans are attached at residues asparagine 142 and asparagine 403.

The protein belongs to the glycosyltransferase 47 family. Present in the xylem and phloem, and, to a lower extent, in interfascicular cells. Expressed in the root tip, shoot apical meristem (SAM), xylem cells of roots and stems, and in the vasculature of roots, cotyledons and leaves.

The protein resides in the golgi apparatus membrane. Involved in the synthesis of the hemicellulose glucuronoxylan, a major component of secondary cell walls. Probably involved in the elongation of glucuronoxylan xylosyl backbone. In Arabidopsis thaliana (Mouse-ear cress), this protein is Probable beta-1,4-xylosyltransferase IRX10L (IRX10L).